A 333-amino-acid chain; its full sequence is MKIGVIGAGSWGTALANVVAANGHDTTLWAYEPELVTGMAATRVNHLFLPGIELHPGLNYTGALAEAVSGAELVLLVTPTQVMRNLLADLAGSIAPTAILASASKGIELGTLCTVSQICCQVLGDAVRERFVALSGPTFAKEVALGLPSLIVAGSANDAAAHTVQAAFSNPVFRVYTSDDAIGVELGGAVKNVIAIAAGISDGLGFGHNTRAALITRGLAEMKRLGRAMGAQDATFAGLAGMGDLVLTCTGDLSRNRTVGVKLGQGLTLEVIMAEMRMVAEGVKSAESVNALAQKLGVEMPITQKVYEILYGNKPARQAVLELMSRDLKPEQA.

NADPH contacts are provided by serine 10, tryptophan 11, and lysine 105. Residues lysine 105, glycine 136, and threonine 138 each contribute to the sn-glycerol 3-phosphate site. Alanine 140 contacts NADPH. Residues lysine 191, aspartate 244, serine 254, arginine 255, and asparagine 256 each contribute to the sn-glycerol 3-phosphate site. Residue lysine 191 is the Proton acceptor of the active site. Arginine 255 provides a ligand contact to NADPH. Residues valine 279 and glutamate 281 each coordinate NADPH.

The protein belongs to the NAD-dependent glycerol-3-phosphate dehydrogenase family.

It is found in the cytoplasm. The catalysed reaction is sn-glycerol 3-phosphate + NAD(+) = dihydroxyacetone phosphate + NADH + H(+). The enzyme catalyses sn-glycerol 3-phosphate + NADP(+) = dihydroxyacetone phosphate + NADPH + H(+). The protein operates within membrane lipid metabolism; glycerophospholipid metabolism. Catalyzes the reduction of the glycolytic intermediate dihydroxyacetone phosphate (DHAP) to sn-glycerol 3-phosphate (G3P), the key precursor for phospholipid synthesis. In Trichlorobacter lovleyi (strain ATCC BAA-1151 / DSM 17278 / SZ) (Geobacter lovleyi), this protein is Glycerol-3-phosphate dehydrogenase [NAD(P)+].